Here is a 149-residue protein sequence, read N- to C-terminus: Decarboxylase AgnL1 (149 aa).

An EthD domain is found at 30 to 125 (PGMSEEDYRH…VGDHEKFADT (96 aa)).

This sequence belongs to the tpcK family.

It catalyses the reaction atrochrysone carboxylate + H(+) = atrochrysone + CO2. The protein operates within secondary metabolite biosynthesis. Functionally, decarboxylase; part of the gene cluster that mediates the biosynthesis of agnestins, dihydroxy-xanthone metabolites. The pathway begins with the assembly and cyclization of atrochrysone thioester by the non-reducing polyketide synthase Agnpks1. The atrochrysone carboxyl ACP thioesterase AgnL7 then breaks the thioester bond and releases the atrochrysone carboxylic acid as the first enzyme-free intermediate. The decarboxylase AgnL1 then catalyzes the concerted decarboxylation-elimination required to convert atochrysone carboxylic acid into emodin anthrone, which is further oxidized to emodin by the anthrone oxygenase AgnL2. Emodin then undergoes reduction catalyzed by the oxidoreductase AgnL4 to yield the dihydroquinone tautomer which is the substrate for reduction by the short chain dehydrogenase AgnL6 reduction to produce hydroxyketone, followed by AgnL8 dehydration and likely spontaneous autoxidation to chrysophanol. Baeyer-Villiger oxidation by the oxidase AgnL3 leads to monodictyphenone via cleavage of the C-10/C-10a bond of chrysophanol. Alternative cleavage at the C-4a/C-10 bond of chrysophanol also leads to the formation some cephalone F. Further conversion to agnestins A and B, requires reduction to dihydro-monodictyphenone, oxidation to agnestin C probably via an epoxide, and rearrangement to either agnestin A or agnestin B directly, although agnestin A or agnestin B can also interconvert. Within the cluster, AgnR1 is the only unassigned oxidoreductase present which could be involved in this conversion. However, AgnR1 seems not to be involved in this step, and thus genes involved in the proposed oxidation/reduction may be located elsewhere on the genome. Further agnestin A derivatives are probably formed by spontaneous decarboxylations, dehydrations and methanolysis reactions. The sequence is that of Decarboxylase AgnL1 from Paecilomyces divaricatus (Penicillium divaricatum).